The following is a 428-amino-acid chain: Ribulose bisphosphate carboxylase (428 aa).

The Proton acceptor role is filled by K151. K153 provides a ligand contact to substrate. Positions 177, 179, and 180 each coordinate Mg(2+). K177 is modified (N6-carboxylysine). Catalysis depends on H270, which acts as the Proton acceptor. Substrate is bound by residues R271, H303, 354-356 (SGG), and 376-379 (QFGG).

It belongs to the RuBisCO large chain family. Type III subfamily. Homodimer or homodecamer. In contrast to form I RuBisCO, the form III RuBisCO is composed solely of large subunits. Mg(2+) is required as a cofactor.

It catalyses the reaction 2 (2R)-3-phosphoglycerate + 2 H(+) = D-ribulose 1,5-bisphosphate + CO2 + H2O. The catalysed reaction is D-ribulose 1,5-bisphosphate + O2 = 2-phosphoglycolate + (2R)-3-phosphoglycerate + 2 H(+). Its function is as follows. Catalyzes the addition of molecular CO(2) and H(2)O to ribulose 1,5-bisphosphate (RuBP), generating two molecules of 3-phosphoglycerate (3-PGA). Functions in an archaeal AMP degradation pathway, together with AMP phosphorylase and R15P isomerase. The chain is Ribulose bisphosphate carboxylase from Methanosarcina mazei (strain ATCC BAA-159 / DSM 3647 / Goe1 / Go1 / JCM 11833 / OCM 88) (Methanosarcina frisia).